We begin with the raw amino-acid sequence, 596 residues long: Nuclear receptor subfamily 2 group C member 2 (596 aa).

Ser-19 is modified (phosphoserine; by MAPK). At Ser-46 the chain carries Phosphoserine. Ser-55 and Ser-68 each carry phosphoserine; by MAPK. The residue at position 98 (Ser-98) is a Phosphoserine. A DNA-binding region (nuclear receptor) is located at residues 114-189 (VEYCVVCGDK…MGMKMESVQS (76 aa)). 2 consecutive NR C4-type zinc fingers follow at residues 117–137 (CVVC…CEGC) and 153–177 (CRSN…LKKC). Lys-192 is covalently cross-linked (Glycyl lysine isopeptide (Lys-Gly) (interchain with G-Cter in SUMO2)). Ser-219 carries the phosphoserine modification. Lys-231 bears the N6-acetyllysine mark. Residues 341-583 (GSIHVISRDQ…SIIPYILKME (243 aa)) enclose the NR LBD domain.

The protein belongs to the nuclear hormone receptor family. NR2 subfamily. Homodimer; can bind DNA as homodimer. Heterodimer; binds DNA as a heterodimer with NR2C1 required for chromatin remodeling and for binding to promoter regions such as globin DR1 repeats. Interacts with PCAF; the interaction preferentially occurs on the non-phosphorylated form and induces NR2C2-mediated transactivation activity and does not require the ligand-binding domain. Interacts (MAPK-mediated phosphorylated form) with NRIP1; the interaction promotes repression of NR2C2-mediated activity. Interacts with NR2C2AP; the interaction represses selective NR2C2-mediated transcriptional activity. Interacts with NLRP10. Interacts (via ligand-binding region) with transcriptional corepressor JAZF1; the interaction promotes NR2C2-mediated transcriptional repression. Post-translationally, phosphorylation on Ser-19 and Ser-68 is an important regulator of NR2C2-mediated transcriptional activity. Phosphorylation on these residues recruits the corepressor, NRIP1, leading to transcripional repression, whereas the non-phosphorylated form preferentially recruits the coactivator, PCAF.

The protein localises to the nucleus. Functionally, orphan nuclear receptor that can act as a repressor or activator of transcription. An important repressor of nuclear receptor signaling pathways such as retinoic acid receptor, retinoid X, vitamin D3 receptor, thyroid hormone receptor and estrogen receptor pathways. May regulate gene expression during the late phase of spermatogenesis. Together with NR2C1, forms the core of the DRED (direct repeat erythroid-definitive) complex that represses embryonic and fetal globin transcription including that of GATA1. Binds to hormone response elements (HREs) consisting of two 5'-AGGTCA-3' half site direct repeat consensus sequences. Plays a fundamental role in early embryonic development and embryonic stem cells. Required for normal spermatogenesis and cerebellum development. Appears to be important for neurodevelopmentally regulated behavior. Activates transcriptional activity of LHCG. Antagonist of PPARA-mediated transactivation. In Homo sapiens (Human), this protein is Nuclear receptor subfamily 2 group C member 2 (NR2C2).